The following is a 333-amino-acid chain: Probable cytosolic iron-sulfur protein assembly protein 1 (333 aa).

WD repeat units follow at residues 12-50 (LHDD…IIEE), 55-94 (AHKK…YNDE), 107-146 (GHEN…EEFE), 153-192 (EHSQ…WECC), 197-238 (GHEG…GEYE), 250-288 (AHTR…WIVE), and 298-333 (YETN…FDEN).

This sequence belongs to the WD repeat CIA1 family. In terms of assembly, interacts with NAR1.

It localises to the cytoplasm. The protein localises to the nucleus. In terms of biological role, essential component of the cytosolic iron-sulfur (Fe/S) protein assembly machinery. Required for the maturation of extramitochondrial Fe/S proteins. This is Probable cytosolic iron-sulfur protein assembly protein 1 from Kluyveromyces lactis (strain ATCC 8585 / CBS 2359 / DSM 70799 / NBRC 1267 / NRRL Y-1140 / WM37) (Yeast).